Consider the following 372-residue polypeptide: Cytochrome b (372 aa).

The next 4 helical transmembrane spans lie at 25–45 (FGSMLLTCLIMQILTGFFLAI), 69–90 (WIMQNLHAIGASMFFICIYIHI), 105–125 (WLSGTTLLITLMATAFFGYVL), and 170–190 (FFALHFILPFAIISLSSIHII). Heme b is bound by residues His75 and His89. The heme b site is built by His174 and His188. His193 contributes to the a ubiquinone binding site. A run of 4 helical transmembrane segments spans residues 218–238 (YKDMLMITIMVTLLFIILSFL), 280–300 (LGGTMALTMSIMILMTTPFTH), 312–332 (LSQTMFWTLIVTFIMITWTAT), and 339–358 (FITISQTTTVFYFSFFIMTP).

It belongs to the cytochrome b family. As to quaternary structure, the cytochrome bc1 complex contains 3 respiratory subunits (MT-CYB, CYC1 and UQCRFS1), 2 core proteins (UQCRC1 and UQCRC2) and probably 6 low-molecular weight proteins. Heme b serves as cofactor.

It is found in the mitochondrion inner membrane. Component of the ubiquinol-cytochrome c reductase complex (complex III or cytochrome b-c1 complex) that is part of the mitochondrial respiratory chain. The b-c1 complex mediates electron transfer from ubiquinol to cytochrome c. Contributes to the generation of a proton gradient across the mitochondrial membrane that is then used for ATP synthesis. The sequence is that of Cytochrome b (MT-CYB) from Aspidelaps scutatus (Shield-nose snake).